Here is a 516-residue protein sequence, read N- to C-terminus: Ammonium transporter Amt1 (516 aa).

Helical transmembrane passes span 17-37 (YVWILVVSFLIFFMQPGFALL), 59-79 (ALGVLVYFVVGAGVATIVGGL), 101-121 (IDWLFGAVFAMTAATIVSGAV), 130-150 (YVVFAATITGFIYPVVQGLTW), 170-190 (LDFAGATVVHMCGGVAGLVGA), 214-234 (MLLAVLGTLILAFGWYGFNVG), 258-278 (VALVTTLGMGAGAVAAMVVST), 286-306 (PLWMANGLLAGLVAVTGAVPH), 307-327 (VTWWGGLVLGALGGAIVLPAY), 342-362 (VFAVHGVAGAVGTALIPVFAV), and 374-394 (VAGVGIIALWTIVASAVVFAA). The interval 426–516 (IGESGPDRGV…SAAVDGGENQ (91 aa)) is disordered. Residues 445–491 (NDVRTDGGNDVRTDGGNDVRTDGGNDVRTDGGNDVRTDGGNDVRTDG) are compositionally biased toward basic and acidic residues.

Belongs to the ammonia transporter channel (TC 1.A.11.2) family. In terms of assembly, homotrimer. Interacts with both GlnK1 and GlnK2 after ammonium shock. Interaction is rapid, reversible and dependent on nitrogen source.

The protein localises to the cell membrane. Functionally, involved in the uptake of ammonium/ammonia (NH(4)(+)/NH(3)). Transport is electrogenic. This chain is Ammonium transporter Amt1, found in Haloferax mediterranei (strain ATCC 33500 / DSM 1411 / JCM 8866 / NBRC 14739 / NCIMB 2177 / R-4) (Halobacterium mediterranei).